Reading from the N-terminus, the 412-residue chain is Multifunctional CCA protein (412 aa).

ATP contacts are provided by G8 and R11. Residues G8 and R11 each coordinate CTP. Mg(2+) is bound by residues D21 and D23. R91, R137, and R140 together coordinate ATP. The CTP site is built by R91, R137, and R140. Residues 228–329 enclose the HD domain; it reads TGIHTLMTLS…VKLFDSIDAW (102 aa).

The protein belongs to the tRNA nucleotidyltransferase/poly(A) polymerase family. Bacterial CCA-adding enzyme type 1 subfamily. In terms of assembly, monomer. Can also form homodimers and oligomers. It depends on Mg(2+) as a cofactor. Ni(2+) is required as a cofactor.

It catalyses the reaction a tRNA precursor + 2 CTP + ATP = a tRNA with a 3' CCA end + 3 diphosphate. The catalysed reaction is a tRNA with a 3' CCA end + 2 CTP + ATP = a tRNA with a 3' CCACCA end + 3 diphosphate. In terms of biological role, catalyzes the addition and repair of the essential 3'-terminal CCA sequence in tRNAs without using a nucleic acid template. Adds these three nucleotides in the order of C, C, and A to the tRNA nucleotide-73, using CTP and ATP as substrates and producing inorganic pyrophosphate. tRNA 3'-terminal CCA addition is required both for tRNA processing and repair. Also involved in tRNA surveillance by mediating tandem CCA addition to generate a CCACCA at the 3' terminus of unstable tRNAs. While stable tRNAs receive only 3'-terminal CCA, unstable tRNAs are marked with CCACCA and rapidly degraded. The protein is Multifunctional CCA protein of Escherichia coli O6:K15:H31 (strain 536 / UPEC).